Consider the following 24-residue polypeptide: Brevinin-1CSa (24 aa).

A disulfide bond links Cys-18 and Cys-24.

As to expression, expressed by the skin glands.

It is found in the secreted. Its subcellular location is the target cell membrane. In terms of biological role, antibacterial peptide. Has activity against the Gram-positive bacterium S.aureus (MIC=2 uM) and the Gram-negative bacterium E.coli (MIC=32 uM). Has a strong hemolytic activity (LC(50)=5 uM). The sequence is that of Brevinin-1CSa from Rana cascadae (Cascades frog).